The chain runs to 288 residues: Protein sprouty homolog 3 (288 aa).

Residues 154 to 267 form the SPR domain; sequence KCVPCTAVRP…PGCRCKRHTN (114 aa).

The protein belongs to the sprouty family. Interacts with TESK1. Interacts with USP11. Interacts with CAV1 (via C-terminus). Expressed in the brain with expression the highest in Purkinje cell bodies and projections in the cerebellum (at protein level). Also expressed in central and peripheral nervous system ganglion cells, superior cervical ganglion and dorsal root ganglion (at protein level). Expressed in the retinal ganglion cell layer and the inner nuclear layer (at protein level).

The protein resides in the cytoplasm. Functionally, inhibits neurite branching, arbor length and neurite complexity. Inhibits EGF-mediated p42/44 ERK signaling. Negatively regulates the MAPK cascade, resulting in a reduction of extracellular matrix protein accumulation. May function as an antagonist of fibroblast growth factor (FGF) pathways and may negatively modulate respiratory organogenesis. The polypeptide is Protein sprouty homolog 3 (Mus musculus (Mouse)).